A 599-amino-acid chain; its full sequence is Aspartate--tRNA(Asp/Asn) ligase (599 aa).

An L-aspartate-binding site is contributed by Glu174. Residues 198–201 (QLFK) are aspartate. Arg220 contributes to the L-aspartate binding site. ATP contacts are provided by residues 220 to 222 (RDE) and Gln229. His457 is a binding site for L-aspartate. Glu491 serves as a coordination point for ATP. Position 498 (Arg498) interacts with L-aspartate. 543-546 (GLDR) contributes to the ATP binding site.

Belongs to the class-II aminoacyl-tRNA synthetase family. Type 1 subfamily. Homodimer.

The protein localises to the cytoplasm. It catalyses the reaction tRNA(Asx) + L-aspartate + ATP = L-aspartyl-tRNA(Asx) + AMP + diphosphate. In terms of biological role, aspartyl-tRNA synthetase with relaxed tRNA specificity since it is able to aspartylate not only its cognate tRNA(Asp) but also tRNA(Asn). Reaction proceeds in two steps: L-aspartate is first activated by ATP to form Asp-AMP and then transferred to the acceptor end of tRNA(Asp/Asn). The protein is Aspartate--tRNA(Asp/Asn) ligase of Paraburkholderia xenovorans (strain LB400).